A 367-amino-acid polypeptide reads, in one-letter code: Uroporphyrinogen decarboxylase (367 aa).

Residues 27–31, Asp77, Tyr157, Thr212, and His333 contribute to the substrate site; that span reads RQAGR.

This sequence belongs to the uroporphyrinogen decarboxylase family. In terms of assembly, homodimer.

It is found in the cytoplasm. It catalyses the reaction uroporphyrinogen III + 4 H(+) = coproporphyrinogen III + 4 CO2. The protein operates within porphyrin-containing compound metabolism; protoporphyrin-IX biosynthesis; coproporphyrinogen-III from 5-aminolevulinate: step 4/4. In terms of biological role, catalyzes the decarboxylation of four acetate groups of uroporphyrinogen-III to yield coproporphyrinogen-III. The polypeptide is Uroporphyrinogen decarboxylase (Cupriavidus metallidurans (strain ATCC 43123 / DSM 2839 / NBRC 102507 / CH34) (Ralstonia metallidurans)).